The chain runs to 217 residues: Methylthioribulose-1-phosphate dehydratase (217 aa).

Zn(2+)-binding residues include histidine 106 and histidine 108.

The protein belongs to the aldolase class II family. MtnB subfamily. The cofactor is Zn(2+).

The enzyme catalyses 5-(methylsulfanyl)-D-ribulose 1-phosphate = 5-methylsulfanyl-2,3-dioxopentyl phosphate + H2O. Its pathway is amino-acid biosynthesis; L-methionine biosynthesis via salvage pathway; L-methionine from S-methyl-5-thio-alpha-D-ribose 1-phosphate: step 2/6. Catalyzes the dehydration of methylthioribulose-1-phosphate (MTRu-1-P) into 2,3-diketo-5-methylthiopentyl-1-phosphate (DK-MTP-1-P). This Xanthomonas euvesicatoria pv. vesicatoria (strain 85-10) (Xanthomonas campestris pv. vesicatoria) protein is Methylthioribulose-1-phosphate dehydratase.